A 360-amino-acid polypeptide reads, in one-letter code: Peptide chain release factor 1 (360 aa).

Gln-237 is modified (N5-methylglutamine).

This sequence belongs to the prokaryotic/mitochondrial release factor family. Post-translationally, methylated by PrmC. Methylation increases the termination efficiency of RF1.

It is found in the cytoplasm. In terms of biological role, peptide chain release factor 1 directs the termination of translation in response to the peptide chain termination codons UAG and UAA. The chain is Peptide chain release factor 1 from Stutzerimonas stutzeri (strain A1501) (Pseudomonas stutzeri).